Reading from the N-terminus, the 341-residue chain is Adenine deaminase (341 aa).

His24, His26, and His204 together coordinate Zn(2+). The Proton donor role is filled by Glu207. Residue Asp285 participates in Zn(2+) binding. Asp286 is a binding site for substrate.

This sequence belongs to the metallo-dependent hydrolases superfamily. Adenosine and AMP deaminases family. Adenine deaminase type 2 subfamily. The cofactor is Zn(2+).

It catalyses the reaction adenine + H2O + H(+) = hypoxanthine + NH4(+). Catalyzes the hydrolytic deamination of adenine to hypoxanthine. Plays an important role in the purine salvage pathway and in nitrogen catabolism. The polypeptide is Adenine deaminase (Sphingopyxis alaskensis (strain DSM 13593 / LMG 18877 / RB2256) (Sphingomonas alaskensis)).